The following is a 708-amino-acid chain: Ribosomal RNA large subunit methyltransferase K/L (708 aa).

The THUMP domain occupies 43 to 154 (QGYQITLWTR…RGKITIGINF (112 aa)).

The protein belongs to the methyltransferase superfamily. RlmKL family.

It localises to the cytoplasm. It catalyses the reaction guanosine(2445) in 23S rRNA + S-adenosyl-L-methionine = N(2)-methylguanosine(2445) in 23S rRNA + S-adenosyl-L-homocysteine + H(+). The catalysed reaction is guanosine(2069) in 23S rRNA + S-adenosyl-L-methionine = N(2)-methylguanosine(2069) in 23S rRNA + S-adenosyl-L-homocysteine + H(+). Its function is as follows. Specifically methylates the guanine in position 2445 (m2G2445) and the guanine in position 2069 (m7G2069) of 23S rRNA. This is Ribosomal RNA large subunit methyltransferase K/L from Shewanella amazonensis (strain ATCC BAA-1098 / SB2B).